Here is a 117-residue protein sequence, read N- to C-terminus: Large ribosomal subunit protein bL20 (117 aa).

This sequence belongs to the bacterial ribosomal protein bL20 family.

Its function is as follows. Binds directly to 23S ribosomal RNA and is necessary for the in vitro assembly process of the 50S ribosomal subunit. It is not involved in the protein synthesizing functions of that subunit. The chain is Large ribosomal subunit protein bL20 from Mesomycoplasma hyopneumoniae (strain 232) (Mycoplasma hyopneumoniae).